Consider the following 548-residue polypeptide: SH2B adapter protein 3 (548 aa).

The span at 1–11 (MNEPTVQPSRT) shows a compositional bias: polar residues. Disordered regions lie at residues 1 to 25 (MNEP…RGWS), 78 to 108 (SLAG…DLGP), and 128 to 160 (RSAG…LLPW). The segment covering 12 to 21 (SSAPASPASP) has biased composition (low complexity). Phosphoserine occurs at positions 13, 102, and 129. Positions 137–148 (TSDTNDIDTTAA) are enriched in polar residues. In terms of domain architecture, PH spans 168–279 (EALKEVVLRY…WLAELRASTG (112 aa)). The segment at 290–313 (PLSLAAEPGPARSPRGSTDSLDQG) is disordered. Serine 302 is subject to Phosphoserine. In terms of domain architecture, SH2 spans 336–434 (WFHGPISRVR…ACDVRLSGYV (99 aa)).

It belongs to the SH2B adapter family. Post-translationally, tyrosine phosphorylated.

Links T-cell receptor activation signal to phospholipase C-gamma-1, GRB2 and phosphatidylinositol 3-kinase. The sequence is that of SH2B adapter protein 3 (Sh2b3) from Mus musculus (Mouse).